A 398-amino-acid chain; its full sequence is Membrane-spanning 4-domains subfamily A member 18 (398 aa).

Helical transmembrane passes span 156–176 (LGAI…NPVL), 178–198 (YYPF…SYIV), 218–238 (SISF…IIIT), and 251–271 (AVSG…CVVS). The interval 316 to 346 (TGPVSATNGPVNTTIHPVNTTTSPVNTTTSP) is disordered. The segment covering 319-331 (VSATNGPVNTTIH) has biased composition (polar residues). Residues 332-346 (PVNTTTSPVNTTTSP) show a composition bias toward low complexity.

Belongs to the MS4A family.

It is found in the membrane. The sequence is that of Membrane-spanning 4-domains subfamily A member 18 (MS4A18) from Homo sapiens (Human).